A 177-amino-acid chain; its full sequence is Probable phospholipid hydroperoxide glutathione peroxidase (177 aa).

Cysteine 42 is an active-site residue.

This sequence belongs to the glutathione peroxidase family.

Its subcellular location is the cytoplasm. The enzyme catalyses a hydroperoxy polyunsaturated fatty acid + 2 glutathione = a hydroxy polyunsaturated fatty acid + glutathione disulfide + H2O. Protects cells and enzymes from oxidative damage, by catalyzing the reduction of hydrogen peroxide, lipid peroxides and organic hydroperoxide, by glutathione. The protein is Probable phospholipid hydroperoxide glutathione peroxidase of Encephalitozoon cuniculi (strain GB-M1) (Microsporidian parasite).